The sequence spans 466 residues: Fumarate hydratase class II (466 aa).

Residues 100-102, Arg-128, 131-134, 141-143, and Thr-189 contribute to the substrate site; these read SGT, HPND, and SSN. A compositionally biased stretch (basic and acidic residues) spans 122 to 137; that stretch reads GERGERRKVHPNDDVN. A disordered region spans residues 122 to 143; sequence GERGERRKVHPNDDVNKGQSSN. His-190 functions as the Proton donor/acceptor in the catalytic mechanism. The active site involves Ser-320. Residues Ser-321 and 326 to 328 contribute to the substrate site; that span reads KVN.

It belongs to the class-II fumarase/aspartase family. Fumarase subfamily. In terms of assembly, homotetramer.

The protein resides in the cytoplasm. It catalyses the reaction (S)-malate = fumarate + H2O. Its pathway is carbohydrate metabolism; tricarboxylic acid cycle; (S)-malate from fumarate: step 1/1. In terms of biological role, involved in the TCA cycle. Catalyzes the stereospecific interconversion of fumarate to L-malate. The sequence is that of Fumarate hydratase class II from Myxococcus xanthus (strain DK1622).